Consider the following 176-residue polypeptide: Glyoxalase domain-containing protein RDO1 (176 aa).

A VOC domain is found at 53-172 (SLDHLVITCH…DNNLIELSSY (120 aa)). The active-site Proton donor/acceptor is the glutamate 168.

This sequence belongs to the glyoxalase I family.

It functions in the pathway secondary metabolite biosynthesis. In terms of biological role, glyoxalase domain-containing protein; part of the gene cluster that mediates the biosynthesis of itaconic acid and 2-hydroxyparaconate. Cis-aconitate is secreted by the mitochondrial tricarboxylate transporter MTT1. In the cytosol cis-aconitate is converted into trans-aconitate via isomerization by the aconitate-delta-isomerase ADI1. Decarboxylation of trans-aconitate by the trans-aconitate decarboxylase TAD1 then leads then to the production of itaconic acid. The cytochrome P450 monooxygenase CYP3 further converts itaconate to 2-hydroxyparaconate via oxidation of the double bond, leading to a transient epoxide, which can subsequently be lactonized to produce 2-hydroxyparaconate. Secretion of itaconate and possibly 2-hydroxyparaconate into the medium is mediated by the major facilitator ITP1. The glyoxalase domain-containing protein RDO1 is not involved in the biosynthesis of itaconate and 2-hydroxyparaconate, however, it might play a role in the further conversion of 2-hydroxyparaconate to itatartarate. In Mycosarcoma maydis (Corn smut fungus), this protein is Glyoxalase domain-containing protein RDO1.